We begin with the raw amino-acid sequence, 305 residues long: UDP-3-O-acyl-N-acetylglucosamine deacetylase (305 aa).

Residues H78, H237, and D241 each coordinate Zn(2+). H264 serves as the catalytic Proton donor.

It belongs to the LpxC family. The cofactor is Zn(2+).

The catalysed reaction is a UDP-3-O-[(3R)-3-hydroxyacyl]-N-acetyl-alpha-D-glucosamine + H2O = a UDP-3-O-[(3R)-3-hydroxyacyl]-alpha-D-glucosamine + acetate. It functions in the pathway glycolipid biosynthesis; lipid IV(A) biosynthesis; lipid IV(A) from (3R)-3-hydroxytetradecanoyl-[acyl-carrier-protein] and UDP-N-acetyl-alpha-D-glucosamine: step 2/6. Catalyzes the hydrolysis of UDP-3-O-myristoyl-N-acetylglucosamine to form UDP-3-O-myristoylglucosamine and acetate, the committed step in lipid A biosynthesis. In Burkholderia cenocepacia (strain ATCC BAA-245 / DSM 16553 / LMG 16656 / NCTC 13227 / J2315 / CF5610) (Burkholderia cepacia (strain J2315)), this protein is UDP-3-O-acyl-N-acetylglucosamine deacetylase.